The chain runs to 215 residues: MANVYDWFEERLEIQALAEDVTSKYVPPHVNIFYCLGGITLVCFLIQFATGFAMTFYYRPTVTEAFSSVEYIMNEVNFGWLIRSIHRWSASMMVLMMILHVFRVYLTGGFKKPRELTWVSGVILAVITVSFGVTGYSLPWDQVGYWAVKIVSGVPEAIPVVGVLISDLLRGGSSVGQATLTRYYSAHTFVLPWLIAVFMLFHFLMIRKQGISGPL.

Residues 32-52 (IFYCLGGITLVCFLIQFATGF) traverse the membrane as a helical segment. Cysteine 35 is a heme c binding site. Heme b-binding residues include histidine 86 and histidine 100. 3 consecutive transmembrane segments (helical) span residues 90–110 (ASMM…TGGF), 116–136 (LTWV…VTGY), and 186–206 (AHTF…FLMI). Heme b-binding residues include histidine 187 and histidine 202.

This sequence belongs to the cytochrome b family. PetB subfamily. In terms of assembly, the 4 large subunits of the cytochrome b6-f complex are cytochrome b6, subunit IV (17 kDa polypeptide, PetD), cytochrome f and the Rieske protein, while the 4 small subunits are PetG, PetL, PetM and PetN. The complex functions as a dimer. Requires heme b as cofactor. Heme c serves as cofactor.

It localises to the cellular thylakoid membrane. Component of the cytochrome b6-f complex, which mediates electron transfer between photosystem II (PSII) and photosystem I (PSI), cyclic electron flow around PSI, and state transitions. The polypeptide is Cytochrome b6 (Nostoc punctiforme (strain ATCC 29133 / PCC 73102)).